Reading from the N-terminus, the 239-residue chain is Peptidyl-tRNA hydrolase (239 aa).

A tRNA-binding site is contributed by Tyr14. Catalysis depends on His19, which acts as the Proton acceptor. TRNA is bound by residues Phe64, Asn66, and Asn112. A disordered region spans residues 186–239 (RTAPPRPSTGTGRPPAKTPARAEEPPAPAASPAPATAPLPDARSPLQKLVDRFK). Residues 193-204 (STGTGRPPAKTP) are compositionally biased toward low complexity. Over residues 210 to 222 (PPAPAASPAPATA) the composition is skewed to pro residues.

The protein belongs to the PTH family. Monomer.

It is found in the cytoplasm. The catalysed reaction is an N-acyl-L-alpha-aminoacyl-tRNA + H2O = an N-acyl-L-amino acid + a tRNA + H(+). In terms of biological role, hydrolyzes ribosome-free peptidyl-tRNAs (with 1 or more amino acids incorporated), which drop off the ribosome during protein synthesis, or as a result of ribosome stalling. Catalyzes the release of premature peptidyl moieties from peptidyl-tRNA molecules trapped in stalled 50S ribosomal subunits, and thus maintains levels of free tRNAs and 50S ribosomes. This is Peptidyl-tRNA hydrolase from Ruegeria pomeroyi (strain ATCC 700808 / DSM 15171 / DSS-3) (Silicibacter pomeroyi).